A 420-amino-acid polypeptide reads, in one-letter code: Dihydrolipoyllysine-residue succinyltransferase component of 2-oxoglutarate dehydrogenase complex (420 aa).

Residues 1-76 form the Lipoyl-binding domain; it reads MAEVKVPELA…EVGQAVAVVG (76 aa). K42 bears the N6-lipoyllysine mark. The tract at residues 75 to 199 is disordered; it reads VGEGQVNTSN…IREKMSRRKK (125 aa). Positions 81 to 90 are enriched in polar residues; the sequence is NTSNDSSNES. Positions 91–102 are enriched in basic and acidic residues; the sequence is SQKDEAKEKETP. The segment covering 103 to 127 has biased composition (polar residues); it reads KQSNPNSSESENTQDNSQQRINATP. The region spanning 124 to 160 is the Peripheral subunit-binding (PSBD) domain; that stretch reads NATPSARRHARKNGVDLSEVSGKGNDVLRKDDVENSQ. Positions 149–158 are enriched in basic and acidic residues; the sequence is DVLRKDDVEN. Over residues 159-174 the composition is skewed to low complexity; sequence SQKSSSQTAKSESKSQ. Positions 175–186 are enriched in polar residues; sequence NSGSKQTNNNPS. Active-site residues include H391 and D395.

This sequence belongs to the 2-oxoacid dehydrogenase family. As to quaternary structure, forms a 24-polypeptide structural core with octahedral symmetry. Part of the 2-oxoglutarate dehydrogenase (OGDH) complex composed of E1 (2-oxoglutarate dehydrogenase), E2 (dihydrolipoamide succinyltransferase) and E3 (dihydrolipoamide dehydrogenase); the complex contains multiple copies of the three enzymatic components (E1, E2 and E3). Requires (R)-lipoate as cofactor.

It catalyses the reaction N(6)-[(R)-dihydrolipoyl]-L-lysyl-[protein] + succinyl-CoA = N(6)-[(R)-S(8)-succinyldihydrolipoyl]-L-lysyl-[protein] + CoA. Its pathway is amino-acid degradation; L-lysine degradation via saccharopine pathway; glutaryl-CoA from L-lysine: step 6/6. Functionally, E2 component of the 2-oxoglutarate dehydrogenase (OGDH) complex which catalyzes the second step in the conversion of 2-oxoglutarate to succinyl-CoA and CO(2). This Staphylococcus epidermidis (strain ATCC 35984 / DSM 28319 / BCRC 17069 / CCUG 31568 / BM 3577 / RP62A) protein is Dihydrolipoyllysine-residue succinyltransferase component of 2-oxoglutarate dehydrogenase complex (odhB).